The following is a 166-amino-acid chain: Coiled-coil domain-containing protein 12 (166 aa).

Methionine 1 carries the post-translational modification N-acetylmethionine. Residues 1–56 (MEATTAGVGRLEEEALRRKERLKALREKTGRKDKEDGEPKTKHLREEEEEGEKHRE) form a disordered region. Residues 8 to 28 (VGRLEEEALRRKERLKALREK) are a coiled coil. A compositionally biased stretch (basic and acidic residues) spans 10 to 56 (RLEEEALRRKERLKALREKTGRKDKEDGEPKTKHLREEEEEGEKHRE). Lysine 53 bears the N6-acetyllysine mark. Residue lysine 94 forms a Glycyl lysine isopeptide (Lys-Gly) (interchain with G-Cter in SUMO2) linkage. Residues 117-144 (KRDVAKKLEKLKKRTQRAIAELIRERLK) adopt a coiled-coil conformation. The disordered stretch occupies residues 147-166 (EDSLASAVDAATEQKTCDSD). Phosphoserine is present on residues serine 149 and serine 165.

In Homo sapiens (Human), this protein is Coiled-coil domain-containing protein 12 (CCDC12).